Here is a 513-residue protein sequence, read N- to C-terminus: 2-isopropylmalate synthase (513 aa).

Residues 5 to 268 enclose the Pyruvate carboxyltransferase domain; sequence LIIFDTTLRD…DVGVDTSQIV (264 aa). The Mn(2+) site is built by D14, H202, H204, and N239. Residues 394-513 form a regulatory domain region; sequence RFISLSQRSE…KAVQKINPQI (120 aa).

This sequence belongs to the alpha-IPM synthase/homocitrate synthase family. LeuA type 1 subfamily. In terms of assembly, homodimer. Mn(2+) is required as a cofactor.

It is found in the cytoplasm. It carries out the reaction 3-methyl-2-oxobutanoate + acetyl-CoA + H2O = (2S)-2-isopropylmalate + CoA + H(+). It functions in the pathway amino-acid biosynthesis; L-leucine biosynthesis; L-leucine from 3-methyl-2-oxobutanoate: step 1/4. Its function is as follows. Catalyzes the condensation of the acetyl group of acetyl-CoA with 3-methyl-2-oxobutanoate (2-ketoisovalerate) to form 3-carboxy-3-hydroxy-4-methylpentanoate (2-isopropylmalate). The chain is 2-isopropylmalate synthase from Cupriavidus pinatubonensis (strain JMP 134 / LMG 1197) (Cupriavidus necator (strain JMP 134)).